Here is a 476-residue protein sequence, read N- to C-terminus: Lactate utilization protein B (476 aa).

2 4Fe-4S ferredoxin-type domains span residues 304 to 334 (GTEF…GHSY) and 353 to 382 (YDDY…LHEL). Residues C313, C316, C319, C323, C366, C369, and C373 each contribute to the [4Fe-4S] cluster site. Residues 440–476 (KGPGPLKAWTESREFPAPSKERFRDWFQTRQKGGNPS) form a disordered region. Basic and acidic residues predominate over residues 449–466 (TESREFPAPSKERFRDWF). Residues 467–476 (QTRQKGGNPS) show a composition bias toward polar residues.

It belongs to the LutB/YkgF family.

Is involved in L-lactate degradation and allows cells to grow with lactate as the sole carbon source. Has probably a role as an electron transporter during oxidation of L-lactate. In Geobacillus kaustophilus (strain HTA426), this protein is Lactate utilization protein B.